A 222-amino-acid chain; its full sequence is Protein GrpE (222 aa).

Positions 1–21 (MSDEKNKFTDASFENCDLKNP) are disordered.

Belongs to the GrpE family. As to quaternary structure, homodimer.

The protein resides in the cytoplasm. Its function is as follows. Participates actively in the response to hyperosmotic and heat shock by preventing the aggregation of stress-denatured proteins, in association with DnaK and GrpE. It is the nucleotide exchange factor for DnaK and may function as a thermosensor. Unfolded proteins bind initially to DnaJ; upon interaction with the DnaJ-bound protein, DnaK hydrolyzes its bound ATP, resulting in the formation of a stable complex. GrpE releases ADP from DnaK; ATP binding to DnaK triggers the release of the substrate protein, thus completing the reaction cycle. Several rounds of ATP-dependent interactions between DnaJ, DnaK and GrpE are required for fully efficient folding. The sequence is that of Protein GrpE from Bartonella tribocorum (strain CIP 105476 / IBS 506).